The sequence spans 617 residues: Dihydroxy-acid dehydratase (617 aa).

Asp81 serves as a coordination point for Mg(2+). Cys122 is a [2Fe-2S] cluster binding site. Residues Asp123 and Lys124 each coordinate Mg(2+). Lys124 bears the N6-carboxylysine mark. Cys195 is a binding site for [2Fe-2S] cluster. Glu490 contributes to the Mg(2+) binding site. Ser516 (proton acceptor) is an active-site residue.

The protein belongs to the IlvD/Edd family. As to quaternary structure, homodimer. [2Fe-2S] cluster is required as a cofactor. Mg(2+) serves as cofactor.

The enzyme catalyses (2R)-2,3-dihydroxy-3-methylbutanoate = 3-methyl-2-oxobutanoate + H2O. It catalyses the reaction (2R,3R)-2,3-dihydroxy-3-methylpentanoate = (S)-3-methyl-2-oxopentanoate + H2O. The protein operates within amino-acid biosynthesis; L-isoleucine biosynthesis; L-isoleucine from 2-oxobutanoate: step 3/4. Its pathway is amino-acid biosynthesis; L-valine biosynthesis; L-valine from pyruvate: step 3/4. Functionally, functions in the biosynthesis of branched-chain amino acids. Catalyzes the dehydration of (2R,3R)-2,3-dihydroxy-3-methylpentanoate (2,3-dihydroxy-3-methylvalerate) into 2-oxo-3-methylpentanoate (2-oxo-3-methylvalerate) and of (2R)-2,3-dihydroxy-3-methylbutanoate (2,3-dihydroxyisovalerate) into 2-oxo-3-methylbutanoate (2-oxoisovalerate), the penultimate precursor to L-isoleucine and L-valine, respectively. This chain is Dihydroxy-acid dehydratase, found in Acidiphilium cryptum (strain JF-5).